We begin with the raw amino-acid sequence, 427 residues long: Inward rectifier potassium channel 2 (427 aa).

Residues 1–81 (MGSVRTNRYS…IFTTCVDIRW (81 aa)) are Cytoplasmic-facing. Cys76 is modified (S-nitrosocysteine). A helical transmembrane segment spans residues 82–106 (RWMLVIFCLAFVLSWLFFGCVFWLI). The Extracellular segment spans residues 107 to 128 (ALLHGDLDASKESKACVSEVNS). The helical; Pore-forming intramembrane region spans 129-140 (FTAAFLFSIETQ). Residues 141 to 147 (TTIGYGF) constitute an intramembrane region (pore-forming). The Selectivity filter signature appears at 142 to 147 (TIGYGF). Over 148–156 (RCVTDECPI) the chain is Extracellular. A helical transmembrane segment spans residues 157 to 178 (AVFMVVFQSIVGCIIDAFIIGA). The Cytoplasmic portion of the chain corresponds to 179–427 (VMAKMAKPKK…PRPLRRESEI (249 aa)). Residues 181–208 (AKMAKPKKRNETLVFSHNAVIAMRDGKL) are polyphosphoinositide (PIP2)-binding. The segment at 384–427 (SKEEDDSENGVPESTSTDTPPDIDLHNQASVPLEPRPLRRESEI) is disordered. Residues 425-427 (SEI) carry the PDZ-binding motif.

The protein belongs to the inward rectifier-type potassium channel (TC 1.A.2.1) family. KCNJ2 subfamily. As to quaternary structure, homotetramer. Homomultimeric and heteromultimeric association with KCNJ4/Kir2.3. Can form heteromeric channels with Kir2.6/KCNJ18. Associates, via its PDZ-recognition domain, with a complex containing LIN7A, LIN7B, LIN7C, DLG1, CASK and APBA1. In terms of processing, S-nitrosylation increases the open probability and inward rectifying currents.

The protein localises to the cell membrane. It localises to the sarcolemma. The protein resides in the T-tubule. The catalysed reaction is K(+)(in) = K(+)(out). Activated by phosphatidylinositol 4,5 biphosphate (PtdIns(4,5)P2). Functionally, inward rectifier potassium channels are characterized by a greater tendency to allow potassium to flow into the cell rather than out of it. Their voltage dependence is regulated by the concentration of extracellular potassium; as external potassium is raised, the voltage range of the channel opening shifts to more positive voltages. The inward rectification is mainly due to the blockage of outward current by internal magnesium. Blocked by external barium or cesium. Probably participates in establishing action potential waveform and excitability of neuronal and muscle tissues. This Cavia porcellus (Guinea pig) protein is Inward rectifier potassium channel 2 (KCNJ2).